A 1625-amino-acid polypeptide reads, in one-letter code: E3 ubiquitin-protein ligase KEG (1625 aa).

The segment at 10 to 56 (CSVCHTRYNEDERVPLLLQCGHGFCKDCLSKMFSTSSDTTLTCPRCR) adopts an RING-type zinc-finger fold. Positions 91–106 (YTDDEDDDDEEDGSDE) are enriched in acidic residues. A disordered region spans residues 91–110 (YTDDEDDDDEEDGSDEDGAR). Residues 141–427 (RQIGEESSSG…TFNAMLATFL (287 aa)) enclose the Protein kinase domain. Residues 147–155 (SSSGGFGGV) and Lys-176 contribute to the ATP site. ANK repeat units lie at residues 467-496 (DNPN…AGGG), 510-540 (DGQS…NVDI), 544-573 (DGDP…NVRS), 579-608 (SGPS…DPNA), 612-641 (EGET…SRSM), 647-676 (KCLT…PEEI), 685-720 (PVGT…DPTA), 725-754 (HGRT…NANI), 758-787 (HNTI…DCNI), 791-826 (EGDN…AVDV), and 832-863 (KTVR…HLSP).

As to quaternary structure, interacts with ABI5 and EDR1. Autophosphotylated and autoubiquitinated in vitro. Post-translationally, phosphorylation enhances self-ubiquitination. In terms of processing, autoubiquitinated in response to abscisic acid (ABA) and subsequently targeted to proteolysis. In terms of tissue distribution, expressed in all tissues of young seedlings. In flowering plants, only detected in the youngest part of the stem, anthers and the receptacle of immature siliques. Not found in mature leave, older parts of the stem, flower parts other than anthers or mature siliques.

The protein resides in the golgi apparatus. The protein localises to the trans-Golgi network. It is found in the early endosome. It catalyses the reaction L-seryl-[protein] + ATP = O-phospho-L-seryl-[protein] + ADP + H(+). The catalysed reaction is L-threonyl-[protein] + ATP = O-phospho-L-threonyl-[protein] + ADP + H(+). The enzyme catalyses S-ubiquitinyl-[E2 ubiquitin-conjugating enzyme]-L-cysteine + [acceptor protein]-L-lysine = [E2 ubiquitin-conjugating enzyme]-L-cysteine + N(6)-ubiquitinyl-[acceptor protein]-L-lysine.. Its pathway is protein modification; protein ubiquitination. In terms of biological role, mediates E2-dependent protein ubiquitination. Acts as a negative regulator of abscisic acid signaling. Required for ABI5 degradation, by mediating its ubiquitination. Together with EDR1, may regulate endocytic trafficking and/or the formation of signaling complexes on trans-Golgi network (TGN)/ early endosome (EE) vesicles during stress responses. This Arabidopsis thaliana (Mouse-ear cress) protein is E3 ubiquitin-protein ligase KEG (KEG).